Consider the following 213-residue polypeptide: Orotate phosphoribosyltransferase (213 aa).

A 5-phospho-alpha-D-ribose 1-diphosphate-binding site is contributed by K26. Residue F34–F35 participates in orotate binding. 5-phospho-alpha-D-ribose 1-diphosphate-binding positions include Y72–K73, R99, K100, K103, H105, and D124–A132. Orotate-binding residues include T128 and R156.

The protein belongs to the purine/pyrimidine phosphoribosyltransferase family. PyrE subfamily. As to quaternary structure, homodimer. It depends on Mg(2+) as a cofactor.

The catalysed reaction is orotidine 5'-phosphate + diphosphate = orotate + 5-phospho-alpha-D-ribose 1-diphosphate. Its pathway is pyrimidine metabolism; UMP biosynthesis via de novo pathway; UMP from orotate: step 1/2. Catalyzes the transfer of a ribosyl phosphate group from 5-phosphoribose 1-diphosphate to orotate, leading to the formation of orotidine monophosphate (OMP). The chain is Orotate phosphoribosyltransferase from Vibrio cholerae serotype O1 (strain ATCC 39315 / El Tor Inaba N16961).